The sequence spans 415 residues: Methylthioribose-1-phosphate isomerase (415 aa).

Catalysis depends on Asp-284, which acts as the Proton donor.

Belongs to the eIF-2B alpha/beta/delta subunits family. MtnA subfamily.

Its subcellular location is the cytoplasm. The protein localises to the nucleus. It catalyses the reaction 5-(methylsulfanyl)-alpha-D-ribose 1-phosphate = 5-(methylsulfanyl)-D-ribulose 1-phosphate. It functions in the pathway amino-acid biosynthesis; L-methionine biosynthesis via salvage pathway; L-methionine from S-methyl-5-thio-alpha-D-ribose 1-phosphate: step 1/6. Functionally, catalyzes the interconversion of methylthioribose-1-phosphate (MTR-1-P) into methylthioribulose-1-phosphate (MTRu-1-P). The polypeptide is Methylthioribose-1-phosphate isomerase (Vanderwaltozyma polyspora (strain ATCC 22028 / DSM 70294 / BCRC 21397 / CBS 2163 / NBRC 10782 / NRRL Y-8283 / UCD 57-17) (Kluyveromyces polysporus)).